Reading from the N-terminus, the 391-residue chain is S-adenosylmethionine synthase (391 aa).

Residue His-14 coordinates ATP. Asp-16 lines the Mg(2+) pocket. Residue Glu-42 coordinates K(+). 2 residues coordinate L-methionine: Glu-55 and Gln-98. Residues 98 to 108 are flexible loop; that stretch reads QSVDIAMGVDE. ATP contacts are provided by residues 172–174, 238–239, Asp-247, 253–254, Ala-270, and Lys-274; these read DGK, RF, and RK. Asp-247 lines the L-methionine pocket. Lys-278 is a binding site for L-methionine.

The protein belongs to the AdoMet synthase family. In terms of assembly, homotetramer; dimer of dimers. Requires Mg(2+) as cofactor. K(+) is required as a cofactor.

It is found in the cytoplasm. It carries out the reaction L-methionine + ATP + H2O = S-adenosyl-L-methionine + phosphate + diphosphate. Its pathway is amino-acid biosynthesis; S-adenosyl-L-methionine biosynthesis; S-adenosyl-L-methionine from L-methionine: step 1/1. Its function is as follows. Catalyzes the formation of S-adenosylmethionine (AdoMet) from methionine and ATP. The overall synthetic reaction is composed of two sequential steps, AdoMet formation and the subsequent tripolyphosphate hydrolysis which occurs prior to release of AdoMet from the enzyme. The chain is S-adenosylmethionine synthase from Clostridium botulinum (strain Hall / ATCC 3502 / NCTC 13319 / Type A).